A 675-amino-acid chain; its full sequence is DNA ligase (675 aa).

NAD(+)-binding positions include 34–38 (DYAFD), 83–84 (SL), and Glu117. Residue Lys119 is the N6-AMP-lysine intermediate of the active site. NAD(+) is bound by residues Arg140, Glu184, Lys297, and Lys321. The Zn(2+) site is built by Cys415, Cys418, Cys433, and Cys439. Residues 598–675 (LVNRNFEGMK…GEEEFEAMLF (78 aa)) enclose the BRCT domain.

Belongs to the NAD-dependent DNA ligase family. LigA subfamily. The cofactor is Mg(2+). Mn(2+) serves as cofactor.

The catalysed reaction is NAD(+) + (deoxyribonucleotide)n-3'-hydroxyl + 5'-phospho-(deoxyribonucleotide)m = (deoxyribonucleotide)n+m + AMP + beta-nicotinamide D-nucleotide.. Functionally, DNA ligase that catalyzes the formation of phosphodiester linkages between 5'-phosphoryl and 3'-hydroxyl groups in double-stranded DNA using NAD as a coenzyme and as the energy source for the reaction. It is essential for DNA replication and repair of damaged DNA. The sequence is that of DNA ligase from Prosthecochloris aestuarii (strain DSM 271 / SK 413).